The chain runs to 481 residues: Bindin (481 aa).

Positions 1-20 (MGFHQILVTVVALALASVRA) are cleaved as a signal peptide. Residues 21-245 (EFPSRTDSPT…DSKRGARKKR (225 aa)) constitute a propeptide that is removed on maturation. Composition is skewed to basic and acidic residues over residues 154–163 (DGDLRKRRES) and 178–189 (RKGDEPAGHTLK). Disordered stretches follow at residues 154–193 (DGDL…DLAP) and 219–243 (GHSP…GARK). Residues 352–360 (LRHLRHHSN) are fucose-binding domain. Residues 376–481 (SAMQEEEEEE…QPYGQGYLQG (106 aa)) form a disordered region. The segment covering 379–389 (QEEEEEEEEDA) has biased composition (acidic residues). The segment covering 406–416 (AGFGGGGGGGA) has biased composition (gly residues). 2 stretches are compositionally biased toward low complexity: residues 417–440 (MMSP…MGFP) and 464–481 (GMGM…YLQG).

The protein belongs to the bindin family.

The protein localises to the cytoplasmic vesicle. The protein resides in the secretory vesicle. It localises to the acrosome lumen. Functionally, species-specific sea urchin sperm protein required for adhesion of sperm to the egg surface during fertilization. Bindin coats the acrosomal process after it is externalized by the acrosome reaction. It binds to sulfated, fucose-containing polysaccharides on the vitelline layer receptor proteoglycans which cover the egg plasma membrane. The sequence is that of Bindin from Strongylocentrotus purpuratus (Purple sea urchin).